Consider the following 116-residue polypeptide: Ribonuclease P protein component (116 aa).

It belongs to the RnpA family. In terms of assembly, consists of a catalytic RNA component (M1 or rnpB) and a protein subunit.

The catalysed reaction is Endonucleolytic cleavage of RNA, removing 5'-extranucleotides from tRNA precursor.. Its function is as follows. RNaseP catalyzes the removal of the 5'-leader sequence from pre-tRNA to produce the mature 5'-terminus. It can also cleave other RNA substrates such as 4.5S RNA. The protein component plays an auxiliary but essential role in vivo by binding to the 5'-leader sequence and broadening the substrate specificity of the ribozyme. The chain is Ribonuclease P protein component from Acholeplasma laidlawii (strain PG-8A).